The chain runs to 318 residues: uncharacterized protein (318 aa).

This is an uncharacterized protein from Ostreid herpesvirus 1 (isolate France) (OsHV-1).